The primary structure comprises 301 residues: Heme A synthase (301 aa).

At 1–7 (MHKGLKR) the chain is on the cytoplasmic side. Residues 8–28 (LGVITSLGVLLVLIQGALVTN) traverse the membrane as a helical segment. At 29–56 (TGSGEGCGQTWPLCFGQVIPLDPPPETV) the chain is on the extracellular side. Residues C35 and C42 are joined by a disulfide bond. The chain crosses the membrane as a helical span at residues 57 to 77 (IEFSHRLVAGIVGMLVILMAI). E58 is a catalytic residue. A heme o-binding site is contributed by H61. The Cytoplasmic portion of the chain corresponds to 78–92 (WSWRRLKHMPETRFL). A helical membrane pass occupies residues 93-113 (AVISVFMIIFQGLLGAGAVVF). Residues 114-117 (GQSD) lie on the Extracellular side of the membrane. The chain crosses the membrane as a helical span at residues 118–138 (LIMALHFGFSALSFASVVLLT). Residue H123 coordinates heme o. At 139-159 (RLAFEDSNPQKQYAPIVSKAY) the chain is on the cytoplasmic side. The helical transmembrane segment at 160–180 (KGYVIFVAIYSYVAIYTGAYV) threads the bilayer. The Extracellular portion of the chain corresponds to 181–215 (KHTNATLACSGFPLCNGQWVPDVFTEAIGVQLLHR). Residues C189 and C195 are joined by a disulfide bond. H214 is a heme b binding site. The helical transmembrane segment at 216-236 (SAAILLSLLLLVLFIWTVKTF) threads the bilayer. Over 237 to 240 (RASR) the chain is Cytoplasmic. Residues 241–261 (VLVVCASLAMLLVIGQAASGV) form a helical membrane-spanning segment. The Extracellular portion of the chain corresponds to 262–274 (AVVLTYNATLTLG). A helical transmembrane segment spans residues 275–295 (IFHALLISLLFTLLCYMVMLV). H277 contributes to the heme b binding site. Residues 296 to 301 (TRHKAK) are Cytoplasmic-facing.

Belongs to the COX15/CtaA family. Type 1 subfamily. Interacts with CtaB. The cofactor is heme b.

It is found in the cell membrane. The catalysed reaction is Fe(II)-heme o + 2 A + H2O = Fe(II)-heme a + 2 AH2. Its pathway is porphyrin-containing compound metabolism; heme A biosynthesis; heme A from heme O: step 1/1. Catalyzes the conversion of heme O to heme A by two successive hydroxylations of the methyl group at C8. The first hydroxylation forms heme I, the second hydroxylation results in an unstable dihydroxymethyl group, which spontaneously dehydrates, resulting in the formyl group of heme A. The chain is Heme A synthase from Shouchella clausii (strain KSM-K16) (Alkalihalobacillus clausii).